Here is a 415-residue protein sequence, read N- to C-terminus: Exodeoxyribonuclease 7 large subunit (415 aa).

This sequence belongs to the XseA family. Heterooligomer composed of large and small subunits.

It is found in the cytoplasm. It carries out the reaction Exonucleolytic cleavage in either 5'- to 3'- or 3'- to 5'-direction to yield nucleoside 5'-phosphates.. Functionally, bidirectionally degrades single-stranded DNA into large acid-insoluble oligonucleotides, which are then degraded further into small acid-soluble oligonucleotides. This is Exodeoxyribonuclease 7 large subunit from Mycobacterium bovis (strain ATCC BAA-935 / AF2122/97).